Here is an 888-residue protein sequence, read N- to C-terminus: Glutamate receptor 3 (888 aa).

The first 22 residues, 1–22 (MGQSVLRAVFFLVLGLLGHSHG), serve as a signal peptide directing secretion. The Extracellular portion of the chain corresponds to 23-546 (GFPNTISIGG…GVFSFLDPLA (524 aa)). 5 N-linked (GlcNAc...) asparagine glycosylation sites follow: N57, N260, N374, N409, and N416. A disulfide bridge connects residues C85 and C334. Positions 502, 504, and 509 each coordinate L-glutamate. A helical membrane pass occupies residues 547–567 (YEIWMCIVFAYIGVSVVLFLV). Residues 568-596 (SRFSPYEWHLEDNNEEPRDPQSPPDPPNE) are Cytoplasmic-facing. An intramembrane region (helical; Pore-forming) is located at residues 597–612 (FGIFNSLWFSLGAFMQ). The stretch at 613–615 (QGC) is an intramembrane region. C615 carries S-palmitoyl cysteine lipidation. At 616–621 (DISPRS) the chain is on the cytoplasmic side. The helical transmembrane segment at 622-642 (LSGRIVGGVWWFFTLIIISSY) threads the bilayer. At 643 to 817 (TANLAAFLTV…DKTSALSLSN (175 aa)) the chain is on the extracellular side. L-glutamate-binding residues include S680, T681, and E731. A disulfide bond links C744 and C799. The helical transmembrane segment at 818-838 (VAGVFYILVGGLGLAMMVALI) threads the bilayer. Topologically, residues 839-888 (EFCYKSRAESKRMKLTKNTQNFKPAPATNTQNYATYREGYNVYGTESVKI) are cytoplasmic. C841 carries S-palmitoyl cysteine lipidation. Residues Y871 and Y881 each carry the phosphotyrosine modification.

Belongs to the glutamate-gated ion channel (TC 1.A.10.1) family. GRIA3 subfamily. As to quaternary structure, homotetramer or heterotetramer of pore-forming glutamate receptor subunits. Tetramers may be formed by the dimerization of dimers. Interacts with PICK1, GRIP1 and GRIP2. Found in a complex with GRIA1, GRIA2, GRIA4, CNIH2, CNIH3, CACNG2, CACNG3, CACNG4, CACNG5, CACNG7 and CACNG8. Interacts with CACNG5. Found in a complex with GRIA1, GRIA2, GRIA4, DLG4, CACNG8 and CNIH2.

It localises to the cell membrane. The protein localises to the postsynaptic cell membrane. Its subcellular location is the postsynaptic density membrane. The enzyme catalyses Ca(2+)(in) = Ca(2+)(out). Ionotropic glutamate receptor that functions as a ligand-gated cation channel, gated by L-glutamate and glutamatergic agonists such as alpha-amino-3-hydroxy-5-methyl-4-isoxazolepropionic acid (AMPA), quisqualic acid, and kainic acid. L-glutamate acts as an excitatory neurotransmitter at many synapses in the central nervous system and plays an important role in fast excitatory synaptic transmission by inducing long-term potentiation. Binding of the excitatory neurotransmitter L-glutamate induces a conformation change, leading to the opening of the cation channel, and thereby converts the chemical signal to an electrical impulse upon entry of calcium. The receptor then desensitizes rapidly and enters a transient inactive state, characterized by the presence of bound agonist. In the presence of CACNG8, shows resensitization which is characterized by a delayed accumulation of current flux upon continued application of glutamate. This is Glutamate receptor 3 from Rattus norvegicus (Rat).